Here is a 296-residue protein sequence, read N- to C-terminus: Bifunctional protein FolD (296 aa).

Residues 166–168 (GRS), serine 195, and threonine 236 each bind NADP(+).

It belongs to the tetrahydrofolate dehydrogenase/cyclohydrolase family. Homodimer.

The enzyme catalyses (6R)-5,10-methylene-5,6,7,8-tetrahydrofolate + NADP(+) = (6R)-5,10-methenyltetrahydrofolate + NADPH. It carries out the reaction (6R)-5,10-methenyltetrahydrofolate + H2O = (6R)-10-formyltetrahydrofolate + H(+). Its pathway is one-carbon metabolism; tetrahydrofolate interconversion. In terms of biological role, catalyzes the oxidation of 5,10-methylenetetrahydrofolate to 5,10-methenyltetrahydrofolate and then the hydrolysis of 5,10-methenyltetrahydrofolate to 10-formyltetrahydrofolate. In Dehalococcoides mccartyi (strain ATCC BAA-2100 / JCM 16839 / KCTC 5957 / BAV1), this protein is Bifunctional protein FolD.